The sequence spans 91 residues: Small ribosomal subunit protein uS19 (91 aa).

It belongs to the universal ribosomal protein uS19 family.

Its function is as follows. Protein S19 forms a complex with S13 that binds strongly to the 16S ribosomal RNA. This Sphingopyxis alaskensis (strain DSM 13593 / LMG 18877 / RB2256) (Sphingomonas alaskensis) protein is Small ribosomal subunit protein uS19.